The following is a 78-amino-acid chain: Major outer membrane lipoprotein Lpp (78 aa).

The first 20 residues, 1–20 (MNRTKLVLGAVILGSTLLAG), serve as a signal peptide directing secretion. A lipid anchor (N-palmitoyl cysteine) is attached at Cys-21. The S-diacylglycerol cysteine moiety is linked to residue Cys-21. 2 repeats span residues 24–34 (NAKIDQLSSDV) and 38–48 (NAKVDQLSNDV). The stretch at 27–75 (IDQLSSDVQTLNAKVDQLSNDVNAIRSDVQAAKDDAARANQRLDNQVRT) forms a coiled coil. Lys-78 bears the N6-murein peptidoglycan lysine mark.

It belongs to the Lpp family. As to quaternary structure, homotrimer.

Its subcellular location is the cell outer membrane. It is found in the secreted. It localises to the cell wall. Its function is as follows. A highly abundant outer membrane lipoprotein that controls the distance between the inner and outer membranes. The only protein known to be covalently linked to the peptidoglycan network (PGN). Also non-covalently binds the PGN. The link between the cell outer membrane and PGN contributes to maintenance of the structural and functional integrity of the cell envelope, and maintains the correct distance between the PGN and the outer membrane. This chain is Major outer membrane lipoprotein Lpp, found in Pectobacterium atrosepticum (strain SCRI 1043 / ATCC BAA-672) (Erwinia carotovora subsp. atroseptica).